The following is a 280-amino-acid chain: Elongation factor 1-delta (280 aa).

Ala-2 bears the N-acetylalanine mark. Lys-17 is modified (N6-acetyllysine). Phosphoserine occurs at positions 37, 44, 60, 86, and 106. Residue Lys-107 is modified to N6-acetyllysine. A disordered region spans residues 113 to 171 (SALEKSSPAHRATTPQTQHVSPMRQVEPPSRKAATATEDDEDDDIDLFGSDEEEDKEAT). N6-acetyllysine; alternate is present on Lys-117. Lys-117 carries the N6-succinyllysine; alternate modification. Position 119 is a phosphoserine (Ser-119). A Phosphothreonine modification is found at Thr-129. At Ser-133 the chain carries Phosphoserine. Residue Thr-147 is modified to Phosphothreonine. Residues 149–168 (TEDDEDDDIDLFGSDEEEDK) show a composition bias toward acidic residues. Residue Ser-162 is modified to Phosphoserine; by CK2.

It belongs to the EF-1-beta/EF-1-delta family. As to quaternary structure, EF-1 is composed of 4 subunits: alpha, beta, delta, and gamma.

In terms of biological role, EF-1-beta and EF-1-delta stimulate the exchange of GDP bound to EF-1-alpha to GTP. This chain is Elongation factor 1-delta (EEF1D), found in Bos taurus (Bovine).